We begin with the raw amino-acid sequence, 407 residues long: Phosphopentomutase (407 aa).

The Mn(2+) site is built by Asp10, Asp306, His311, Asp347, His348, and His359.

This sequence belongs to the phosphopentomutase family. Mn(2+) serves as cofactor.

It is found in the cytoplasm. It carries out the reaction 2-deoxy-alpha-D-ribose 1-phosphate = 2-deoxy-D-ribose 5-phosphate. It catalyses the reaction alpha-D-ribose 1-phosphate = D-ribose 5-phosphate. It functions in the pathway carbohydrate degradation; 2-deoxy-D-ribose 1-phosphate degradation; D-glyceraldehyde 3-phosphate and acetaldehyde from 2-deoxy-alpha-D-ribose 1-phosphate: step 1/2. Isomerase that catalyzes the conversion of deoxy-ribose 1-phosphate (dRib-1-P) and ribose 1-phosphate (Rib-1-P) to deoxy-ribose 5-phosphate (dRib-5-P) and ribose 5-phosphate (Rib-5-P), respectively. The chain is Phosphopentomutase from Escherichia coli (strain UTI89 / UPEC).